The sequence spans 428 residues: Aerobic C4-dicarboxylate transport protein (428 aa).

A run of 9 helical transmembrane segments spans residues 5-27 (LFKS…GHYY), 47-64 (MIIA…IAGM), 77-99 (ALLY…VNVV), 141-163 (VIGA…FGFA), 184-206 (VIFG…AMAF), 216-238 (LVQL…VVVL), 289-311 (VVGL…YLTM), 326-348 (IFHQ…GVTG), and 353-375 (VLAA…ILGI).

It belongs to the dicarboxylate/amino acid:cation symporter (DAACS) (TC 2.A.23) family.

It is found in the cell inner membrane. In terms of biological role, responsible for the transport of dicarboxylates such as succinate, fumarate, and malate from the periplasm across the membrane. This chain is Aerobic C4-dicarboxylate transport protein, found in Salmonella typhi.